A 1401-amino-acid chain; its full sequence is DNA-directed RNA polymerase subunit beta' (1401 aa).

Cysteine 71, cysteine 73, cysteine 86, and cysteine 89 together coordinate Zn(2+). 3 residues coordinate Mg(2+): aspartate 462, aspartate 464, and aspartate 466. Zn(2+) contacts are provided by cysteine 810, cysteine 884, cysteine 891, and cysteine 894. The segment at 1377–1401 is disordered; sequence RRKGTGAESATPMLADMANDPAAAE.

Belongs to the RNA polymerase beta' chain family. The RNAP catalytic core consists of 2 alpha, 1 beta, 1 beta' and 1 omega subunit. When a sigma factor is associated with the core the holoenzyme is formed, which can initiate transcription. It depends on Mg(2+) as a cofactor. Requires Zn(2+) as cofactor.

The enzyme catalyses RNA(n) + a ribonucleoside 5'-triphosphate = RNA(n+1) + diphosphate. Functionally, DNA-dependent RNA polymerase catalyzes the transcription of DNA into RNA using the four ribonucleoside triphosphates as substrates. The sequence is that of DNA-directed RNA polymerase subunit beta' from Rhizobium meliloti (strain 1021) (Ensifer meliloti).